Consider the following 358-residue polypeptide: Aromatic amino acid aminotransferase (358 aa).

At lysine 214 the chain carries N6-(pyridoxal phosphate)lysine.

It belongs to the class-II pyridoxal-phosphate-dependent aminotransferase family. Homodimer. It depends on pyridoxal 5'-phosphate as a cofactor.

The enzyme catalyses an aromatic L-alpha-amino acid + 2-oxoglutarate = an aromatic oxo-acid + L-glutamate. Its function is as follows. Aminotransferase that catalyzes the conversion of aromatic amino acids and 2-oxoglutarate into corresponding aromatic oxo acids and L-glutamate. In Rhodococcus opacus (strain B4), this protein is Aromatic amino acid aminotransferase.